Consider the following 387-residue polypeptide: MTKKKKLTHGQVRRVRNNQHKKLKQEESIVWDEALLGSAQPGLVITRFGQHADIEDPVTGEIHRCNLRRGIESLVSGDNVLWRPGAETLAGISGVVEAVEARSSVLVRPDYYDGLKPVAANVDQMVIVSSVLPELSLNIIDRYLIASETLGIAPLIVLNKIDLLSPELREQYSTWLNDYRAIGYDVLYVSKKTGEGIADLEVKLRDRTNVFVGQSGVGKSSLVNALLPELEEDVEEGAISETSGLGQHTTTAARLYHIPSGGDLIDSPGVREFGLWHLETDDVTKAYVEFRPYLGGCKFRDCKHGDDPGCLLREAVSKGEISALRFDNYHRIVQSMTENKANRQYSRSKKPICKSKLLASLEHLLTEGAIFSNISRPSPLYWNVNHG.

The region spanning 112–273 (YDGLKPVAAN…LIDSPGVREF (162 aa)) is the CP-type G domain. GTP is bound by residues 159-162 (NKID) and 213-221 (GQSGVGKSS). Zn(2+)-binding residues include Cys297, Cys302, His304, and Cys310.

Belongs to the TRAFAC class YlqF/YawG GTPase family. RsgA subfamily. Monomer. Associates with 30S ribosomal subunit, binds 16S rRNA. It depends on Zn(2+) as a cofactor.

Its subcellular location is the cytoplasm. One of several proteins that assist in the late maturation steps of the functional core of the 30S ribosomal subunit. Helps release RbfA from mature subunits. May play a role in the assembly of ribosomal proteins into the subunit. Circularly permuted GTPase that catalyzes slow GTP hydrolysis, GTPase activity is stimulated by the 30S ribosomal subunit. In Vibrio cholerae serotype O1 (strain ATCC 39315 / El Tor Inaba N16961), this protein is Small ribosomal subunit biogenesis GTPase RsgA.